Here is an 84-residue protein sequence, read N- to C-terminus: ATP synthase subunit c (84 aa).

The next 2 membrane-spanning stretches (helical) occupy residues 13–33 and 56–76; these read IAVG…WGLI and FIFA…GFWF.

This sequence belongs to the ATPase C chain family. In terms of assembly, F-type ATPases have 2 components, F(1) - the catalytic core - and F(0) - the membrane proton channel. F(1) has five subunits: alpha(3), beta(3), gamma(1), delta(1), epsilon(1). F(0) has three main subunits: a(1), b(2) and c(10-14). The alpha and beta chains form an alternating ring which encloses part of the gamma chain. F(1) is attached to F(0) by a central stalk formed by the gamma and epsilon chains, while a peripheral stalk is formed by the delta and b chains.

The protein resides in the cell inner membrane. F(1)F(0) ATP synthase produces ATP from ADP in the presence of a proton or sodium gradient. F-type ATPases consist of two structural domains, F(1) containing the extramembraneous catalytic core and F(0) containing the membrane proton channel, linked together by a central stalk and a peripheral stalk. During catalysis, ATP synthesis in the catalytic domain of F(1) is coupled via a rotary mechanism of the central stalk subunits to proton translocation. Its function is as follows. Key component of the F(0) channel; it plays a direct role in translocation across the membrane. A homomeric c-ring of between 10-14 subunits forms the central stalk rotor element with the F(1) delta and epsilon subunits. This Acidithiobacillus ferrooxidans (strain ATCC 23270 / DSM 14882 / CIP 104768 / NCIMB 8455) (Ferrobacillus ferrooxidans (strain ATCC 23270)) protein is ATP synthase subunit c.